We begin with the raw amino-acid sequence, 487 residues long: Recombining binding protein suppressor of hairless (487 aa).

DNA-binding regions lie at residues 44–54 and 152–157; these read QKSYGNEKRFF and SKPSKK. K162 is modified (N6-acetyllysine). Positions 179-184 are DNA-binding; that stretch reads RLRSQT. Residues 342–432 enclose the IPT/TIG domain; it reads PVVESLQLNG…YSTSLTFTYT (91 aa). Polar residues predominate over residues 452–468; that stretch reads SSQVPPNESNTNSEGSY. Residues 452-487 are disordered; the sequence is SSQVPPNESNTNSEGSYTNVSTNSTSVTSSTATVVS. Low complexity predominate over residues 469–487; sequence TNVSTNSTSVTSSTATVVS.

The protein belongs to the Su(H) family. As to quaternary structure, interacts with activated NOTCH1, NOTCH2 or NOTCH3. Interacts with MINT/SHARP. This interaction may mediate the recruitment of large corepressor complexes containing proteins such as HDAC1, HDAC2, NCOR2, SAP30, FHL1/KYOT2 and CIR1. Interacts with EP300, MAML1 and PTF1A. Interacts with RITA1, leading to nuclear export, prevent the interaction between RBPJ and NICD product and subsequent down-regulation of the Notch signaling pathway. Interacts with SNW1. Interacts with CHCHD2 and CXXC5. Interacts with BEND6 (via BEN domain). Interacts with NKAPL. Interacts with ZMIZ1. Interacts with RBM15. Interacts with L3MBTL3 and KDM1A; the interaction with KDM1A is weaker in the absence of L3MBTL3 and the interaction with L3MBTL3 is impaired by Notch-derived peptides containing the intracellular domain (NICD).

It localises to the nucleus. The protein resides in the cytoplasm. Functionally, transcriptional regulator that plays a central role in Notch signaling, a signaling pathway involved in cell-cell communication that regulates a broad spectrum of cell-fate determinations. Acts as a transcriptional repressor when it is not associated with Notch proteins. When associated with some NICD product of Notch proteins (Notch intracellular domain), it acts as a transcriptional activator that activates transcription of Notch target genes. Probably represses or activates transcription via the recruitment of chromatin remodeling complexes containing histone deacetylase or histone acetylase proteins, respectively. Specifically binds to the immunoglobulin kappa-type J segment recombination signal sequence. Binds specifically to methylated DNA. Binds to the oxygen responsive element of COX4I2 and activates its transcription under hypoxia conditions (4% oxygen). Negatively regulates the phagocyte oxidative burst in response to bacterial infection by repressing transcription of NADPH oxidase subunits. In Bos taurus (Bovine), this protein is Recombining binding protein suppressor of hairless (RBPJ).